An 803-amino-acid chain; its full sequence is Dynein axonemal intermediate chain 4 (803 aa).

Residues 1–33 are compositionally biased toward polar residues; that stretch reads MPSSPTSTRKQTNFTASVSAQSRKSISFGNPKS. 3 disordered regions span residues 1-41, 88-109, and 143-163; these read MPSS…GYAG, LYHP…SQEG, and STVS…LEDP. Residues 143-155 are compositionally biased toward low complexity; it reads STVSKSSISTTES. WD repeat units follow at residues 492-532, 541-589, 616-656, 660-700, 703-742, and 748-787; these read QSPY…NTPV, KHLG…DCHD, SRQA…QYLE, GHKG…PFFT, PTTY…LDPL, and NPGI…TPTE.

In terms of assembly, part of the multisubunit axonemal dynein complex formed at least of two heavy chains and a number of intermediate and light chains. Associated with axonemal dynein subunits such as, DNAH2, DNAI3, and DYNLT1. Interacts with DYNLT1.

It localises to the cytoplasm. It is found in the cytoskeleton. The protein resides in the flagellum axoneme. Its subcellular location is the cilium axoneme. The protein localises to the dynein axonemal particle. Its function is as follows. Plays a critical role in the assembly of axonemal dynein complex, thereby playing a role in ciliary motility. This is Dynein axonemal intermediate chain 4 from Rattus norvegicus (Rat).